A 127-amino-acid polypeptide reads, in one-letter code: Protein translocase subunit SecE (127 aa).

The next 3 membrane-spanning stretches (helical) occupy residues 16-36 (AMKW…NYLY), 41-61 (LPLR…VALL), and 96-116 (IVAA…GILV).

This sequence belongs to the SecE/SEC61-gamma family. As to quaternary structure, component of the Sec protein translocase complex. Heterotrimer consisting of SecY, SecE and SecG subunits. The heterotrimers can form oligomers, although 1 heterotrimer is thought to be able to translocate proteins. Interacts with the ribosome. Interacts with SecDF, and other proteins may be involved. Interacts with SecA.

It is found in the cell inner membrane. Its function is as follows. Essential subunit of the Sec protein translocation channel SecYEG. Clamps together the 2 halves of SecY. May contact the channel plug during translocation. The sequence is that of Protein translocase subunit SecE from Salmonella typhi.